We begin with the raw amino-acid sequence, 1002 residues long: Mannan endo-1,4-beta-mannosidase (1002 aa).

The N-terminal stretch at 1-28 (MKTTVTKLLATVAAASTIFGMSTLPAFA) is a signal peptide. A GH26 domain is found at 49-396 (AETRALFDKL…ADSNKNLMAS (348 aa)). H144 contacts substrate. Residue E205 is the Proton donor of the active site. 2 residues coordinate substrate: W210 and Y278. Catalysis depends on E316, which acts as the Nucleophile. K384 serves as a coordination point for substrate. CBM11 domains are found at residues 523–703 (VDNV…GKRD) and 717–897 (AKAQ…NEQT). 2 disordered regions span residues 702 to 722 (RDAY…AQSV) and 888 to 969 (PAEN…LSRT). The span at 707–719 (PNTNPTPGNTAKA) shows a compositional bias: polar residues. Basic and acidic residues-rich tracts occupy residues 897 to 913 (TPKD…KEQE) and 952 to 966 (PDTK…KDGL). The short motif at 966-970 (LSRTG) is the LPXTG sorting signal element. T969 is subject to Pentaglycyl murein peptidoglycan amidated threonine. The propeptide at 970–1002 (GSNIISAIAAVAVLLLGGCAVLIARKRKGGDIE) is removed by sortase.

This sequence belongs to the glycosyl hydrolase 26 family. Homodimer.

It localises to the secreted. The protein localises to the cell wall. It carries out the reaction Random hydrolysis of (1-&gt;4)-beta-D-mannosidic linkages in mannans, galactomannans and glucomannans.. In terms of biological role, beta-mannanase likely involved in the utilization of carbohydrates in the human gut. Catalyzes the hydrolysis of different beta-1,4-linked mannans, such as ivory nut mannan, konjac glucomannan, as well as carob and guar gum galactomannans, to a mixture of oligosaccharides. The dominant product from ivory nut mannan is found to be mannotriose; mannobiose and mannotetraose are produced to a lesser extent. Does not hydrolyze mannobiose, and hydrolyzes mannotriose at a significantly lower rate than the longer oligosaccharides. In Bifidobacterium adolescentis (strain ATCC 15703 / DSM 20083 / NCTC 11814 / E194a), this protein is Mannan endo-1,4-beta-mannosidase.